Here is a 287-residue protein sequence, read N- to C-terminus: 2-dehydro-3-deoxyphosphooctonate aldolase (287 aa).

This sequence belongs to the KdsA family.

It is found in the cytoplasm. The catalysed reaction is D-arabinose 5-phosphate + phosphoenolpyruvate + H2O = 3-deoxy-alpha-D-manno-2-octulosonate-8-phosphate + phosphate. It functions in the pathway carbohydrate biosynthesis; 3-deoxy-D-manno-octulosonate biosynthesis; 3-deoxy-D-manno-octulosonate from D-ribulose 5-phosphate: step 2/3. It participates in bacterial outer membrane biogenesis; lipopolysaccharide biosynthesis. This Caulobacter vibrioides (strain ATCC 19089 / CIP 103742 / CB 15) (Caulobacter crescentus) protein is 2-dehydro-3-deoxyphosphooctonate aldolase.